A 265-amino-acid polypeptide reads, in one-letter code: RWD domain-containing protein 3 (265 aa).

The 108-residue stretch at 7-114 (EEVAALSAIY…WTQQNLNNLI (108 aa)) folds into the RWD domain.

The protein resides in the nucleus. It localises to the cytoplasm. Functionally, enhancer of SUMO conjugation. Increases SUMO conjugation to proteins by promoting the: binding of E1 and E2 enzymes, thioester linkage between SUMO and ube2i/ubc9 and transfer of SUMO to specific target proteins which include hif1a, pias, nfkbia, nr3c1 and top1. Has no effect on ubiquitination. This Xenopus tropicalis (Western clawed frog) protein is RWD domain-containing protein 3 (rwdd3).